A 131-amino-acid polypeptide reads, in one-letter code: UPF0102 protein YraN (131 aa).

A compositionally biased stretch (polar residues) spans M1–T19. Positions M1–G20 are disordered.

This sequence belongs to the UPF0102 family.

This Escherichia coli O17:K52:H18 (strain UMN026 / ExPEC) protein is UPF0102 protein YraN.